A 133-amino-acid polypeptide reads, in one-letter code: ATP synthase epsilon chain (133 aa).

Belongs to the ATPase epsilon chain family. As to quaternary structure, F-type ATPases have 2 components, CF(1) - the catalytic core - and CF(0) - the membrane proton channel. CF(1) has five subunits: alpha(3), beta(3), gamma(1), delta(1), epsilon(1). CF(0) has three main subunits: a, b and c.

Its subcellular location is the cell membrane. Functionally, produces ATP from ADP in the presence of a proton gradient across the membrane. The chain is ATP synthase epsilon chain from Clostridium perfringens (strain ATCC 13124 / DSM 756 / JCM 1290 / NCIMB 6125 / NCTC 8237 / Type A).